The following is a 398-amino-acid chain: Arginine biosynthesis bifunctional protein ArgJ (398 aa).

Substrate contacts are provided by threonine 148, lysine 174, threonine 185, glutamate 271, asparagine 393, and threonine 398. The active-site Nucleophile is the threonine 185.

This sequence belongs to the ArgJ family. In terms of assembly, heterotetramer of two alpha and two beta chains.

Its subcellular location is the cytoplasm. It catalyses the reaction N(2)-acetyl-L-ornithine + L-glutamate = N-acetyl-L-glutamate + L-ornithine. The enzyme catalyses L-glutamate + acetyl-CoA = N-acetyl-L-glutamate + CoA + H(+). It participates in amino-acid biosynthesis; L-arginine biosynthesis; L-ornithine and N-acetyl-L-glutamate from L-glutamate and N(2)-acetyl-L-ornithine (cyclic): step 1/1. It functions in the pathway amino-acid biosynthesis; L-arginine biosynthesis; N(2)-acetyl-L-ornithine from L-glutamate: step 1/4. Functionally, catalyzes two activities which are involved in the cyclic version of arginine biosynthesis: the synthesis of N-acetylglutamate from glutamate and acetyl-CoA as the acetyl donor, and of ornithine by transacetylation between N(2)-acetylornithine and glutamate. The chain is Arginine biosynthesis bifunctional protein ArgJ from Listeria monocytogenes serovar 1/2a (strain ATCC BAA-679 / EGD-e).